We begin with the raw amino-acid sequence, 64 residues long: Translational regulator CsrA (64 aa).

Belongs to the CsrA/RsmA family. As to quaternary structure, homodimer; the beta-strands of each monomer intercalate to form a hydrophobic core, while the alpha-helices form wings that extend away from the core.

The protein localises to the cytoplasm. In terms of biological role, a key translational regulator that binds mRNA to regulate translation initiation and/or mRNA stability. Mediates global changes in gene expression, shifting from rapid growth to stress survival by linking envelope stress, the stringent response and the catabolite repression systems. Usually binds in the 5'-UTR; binding at or near the Shine-Dalgarno sequence prevents ribosome-binding, repressing translation, binding elsewhere in the 5'-UTR can activate translation and/or stabilize the mRNA. Its function is antagonized by small RNA(s). The chain is Translational regulator CsrA from Methylococcus capsulatus (strain ATCC 33009 / NCIMB 11132 / Bath).